The following is a 558-amino-acid chain: NAD-dependent malic enzyme 2 (558 aa).

Y101 acts as the Proton donor in catalysis. R154 contributes to the NAD(+) binding site. K172 functions as the Proton acceptor in the catalytic mechanism. A divalent metal cation-binding residues include E243, D244, and D267. NAD(+) contacts are provided by D267 and N411.

Belongs to the malic enzymes family. In terms of assembly, homotetramer. Requires Mg(2+) as cofactor. It depends on Mn(2+) as a cofactor.

It carries out the reaction (S)-malate + NAD(+) = pyruvate + CO2 + NADH. The enzyme catalyses oxaloacetate + H(+) = pyruvate + CO2. This Photobacterium profundum (strain SS9) protein is NAD-dependent malic enzyme 2.